The chain runs to 371 residues: Transmembrane protein 229A (371 aa).

Residues 1–30 form a disordered region; sequence MAGSDVASEGPSPRDGATRRPGATGGLRSQ. Helical transmembrane passes span 51-71, 117-137, 235-255, 269-289, 301-321, and 334-354; these read LPAWMRLYFYGMHGITLDVLV, AFLFNFLLYPSAHVGLQTLAG, FLFFGMHGFLDEIFFTFFFNV, LWSFFMYGSCSFVVEKLYFHL, VPIYVIFIYAWEFSWGLGLRM, and LNFMGLITLMYLPGWLFLSVY.

This sequence belongs to the TMEM229 family.

The protein localises to the membrane. The chain is Transmembrane protein 229A (Tmem229a) from Mus musculus (Mouse).